The sequence spans 294 residues: 4-hydroxy-tetrahydrodipicolinate synthase (294 aa).

Residue threonine 47 coordinates pyruvate. Tyrosine 136 acts as the Proton donor/acceptor in catalysis. Lysine 164 functions as the Schiff-base intermediate with substrate in the catalytic mechanism. Residue valine 206 participates in pyruvate binding.

It belongs to the DapA family. In terms of assembly, homotetramer; dimer of dimers.

Its subcellular location is the cytoplasm. It catalyses the reaction L-aspartate 4-semialdehyde + pyruvate = (2S,4S)-4-hydroxy-2,3,4,5-tetrahydrodipicolinate + H2O + H(+). It functions in the pathway amino-acid biosynthesis; L-lysine biosynthesis via DAP pathway; (S)-tetrahydrodipicolinate from L-aspartate: step 3/4. In terms of biological role, catalyzes the condensation of (S)-aspartate-beta-semialdehyde [(S)-ASA] and pyruvate to 4-hydroxy-tetrahydrodipicolinate (HTPA). The chain is 4-hydroxy-tetrahydrodipicolinate synthase from Nostoc sp. (strain PCC 7120 / SAG 25.82 / UTEX 2576).